Here is a 223-residue protein sequence, read N- to C-terminus: UPF0173 metal-dependent hydrolase Amet_4625 (223 aa).

It belongs to the UPF0173 family.

In Alkaliphilus metalliredigens (strain QYMF), this protein is UPF0173 metal-dependent hydrolase Amet_4625.